Consider the following 198-residue polypeptide: Holliday junction branch migration complex subunit RuvA (198 aa).

A domain I region spans residues 1-63 (MYDYIKGQLT…EDAHLLFGFH (63 aa)). The domain II stretch occupies residues 64–142 (TEDEKDVFLK…EAPQETGHTK (79 aa)). The interval 143–147 (ARSNK) is flexible linker. A domain III region spans residues 148–198 (AGNTQLDEAIEALLALGYKAKELKKIRAFFEGTSETAEQYIKSALKLLMKG).

This sequence belongs to the RuvA family. Homotetramer. Forms an RuvA(8)-RuvB(12)-Holliday junction (HJ) complex. HJ DNA is sandwiched between 2 RuvA tetramers; dsDNA enters through RuvA and exits via RuvB. An RuvB hexamer assembles on each DNA strand where it exits the tetramer. Each RuvB hexamer is contacted by two RuvA subunits (via domain III) on 2 adjacent RuvB subunits; this complex drives branch migration. In the full resolvosome a probable DNA-RuvA(4)-RuvB(12)-RuvC(2) complex forms which resolves the HJ.

The protein resides in the cytoplasm. Its function is as follows. The RuvA-RuvB-RuvC complex processes Holliday junction (HJ) DNA during genetic recombination and DNA repair, while the RuvA-RuvB complex plays an important role in the rescue of blocked DNA replication forks via replication fork reversal (RFR). RuvA specifically binds to HJ cruciform DNA, conferring on it an open structure. The RuvB hexamer acts as an ATP-dependent pump, pulling dsDNA into and through the RuvAB complex. HJ branch migration allows RuvC to scan DNA until it finds its consensus sequence, where it cleaves and resolves the cruciform DNA. The protein is Holliday junction branch migration complex subunit RuvA of Streptococcus pyogenes serotype M1.